Here is a 190-residue protein sequence, read N- to C-terminus: Orotate phosphoribosyltransferase (190 aa).

5-phospho-alpha-D-ribose 1-diphosphate-binding positions include Arg-101, Lys-102, Lys-105, His-107, and 128-136; that span reads EDVVTTGGS. Thr-132 and Arg-160 together coordinate orotate.

Belongs to the purine/pyrimidine phosphoribosyltransferase family. PyrE subfamily. Homodimer. It depends on Mg(2+) as a cofactor.

The catalysed reaction is orotidine 5'-phosphate + diphosphate = orotate + 5-phospho-alpha-D-ribose 1-diphosphate. Its pathway is pyrimidine metabolism; UMP biosynthesis via de novo pathway; UMP from orotate: step 1/2. Functionally, catalyzes the transfer of a ribosyl phosphate group from 5-phosphoribose 1-diphosphate to orotate, leading to the formation of orotidine monophosphate (OMP). This Synechococcus sp. (strain CC9605) protein is Orotate phosphoribosyltransferase.